Here is a 625-residue protein sequence, read N- to C-terminus: DNA-directed RNA polymerase subunit gamma (625 aa).

Zn(2+) contacts are provided by C71, C73, C86, and C89. Mg(2+)-binding residues include D467, D469, and D471.

Belongs to the RNA polymerase beta' chain family. RpoC1 subfamily. In cyanobacteria the RNAP catalytic core is composed of 2 alpha, 1 beta, 1 beta', 1 gamma and 1 omega subunit. When a sigma factor is associated with the core the holoenzyme is formed, which can initiate transcription. Mg(2+) is required as a cofactor. It depends on Zn(2+) as a cofactor.

The catalysed reaction is RNA(n) + a ribonucleoside 5'-triphosphate = RNA(n+1) + diphosphate. In terms of biological role, DNA-dependent RNA polymerase catalyzes the transcription of DNA into RNA using the four ribonucleoside triphosphates as substrates. In Rippkaea orientalis (strain PCC 8801 / RF-1) (Cyanothece sp. (strain PCC 8801)), this protein is DNA-directed RNA polymerase subunit gamma.